Consider the following 545-residue polypeptide: Esterase-5B (545 aa).

The signal sequence occupies residues 1-19 (MYCAKLILLLGCFWISSSA). Cysteine 84 and cysteine 103 are oxidised to a cystine. Residue asparagine 113 is glycosylated (N-linked (GlcNAc...) asparagine). The active-site Acyl-ester intermediate is serine 207. Cysteine 259 and cysteine 271 are disulfide-bonded. N-linked (GlcNAc...) asparagine glycosylation occurs at asparagine 421. The active-site Charge relay system is histidine 467. A glycan (N-linked (GlcNAc...) asparagine) is linked at asparagine 507. Cysteine 515 and cysteine 536 form a disulfide bridge.

Belongs to the type-B carboxylesterase/lipase family. Homodimer.

Its subcellular location is the secreted. The enzyme catalyses a carboxylic ester + H2O = an alcohol + a carboxylate + H(+). The sequence is that of Esterase-5B (Est-5B) from Drosophila persimilis (Fruit fly).